The sequence spans 249 residues: DNA polymerase sliding clamp (249 aa).

Belongs to the PCNA family. In terms of assembly, homotrimer. The subunits circularize to form a toroid; DNA passes through its center. Replication factor C (RFC) is required to load the toroid on the DNA.

Its function is as follows. Sliding clamp subunit that acts as a moving platform for DNA processing. Responsible for tethering the catalytic subunit of DNA polymerase and other proteins to DNA during high-speed replication. This Thermococcus sibiricus (strain DSM 12597 / MM 739) protein is DNA polymerase sliding clamp.